The primary structure comprises 693 residues: Glycine--tRNA ligase beta subunit (693 aa).

It belongs to the class-II aminoacyl-tRNA synthetase family. Tetramer of two alpha and two beta subunits.

It localises to the cytoplasm. The enzyme catalyses tRNA(Gly) + glycine + ATP = glycyl-tRNA(Gly) + AMP + diphosphate. This chain is Glycine--tRNA ligase beta subunit, found in Ligilactobacillus salivarius (strain UCC118) (Lactobacillus salivarius).